Consider the following 412-residue polypeptide: 2,3-bisphosphoglycerate-independent phosphoglycerate mutase (412 aa).

The protein belongs to the BPG-independent phosphoglycerate mutase family. A-PGAM subfamily.

The catalysed reaction is (2R)-2-phosphoglycerate = (2R)-3-phosphoglycerate. The protein operates within carbohydrate degradation; glycolysis; pyruvate from D-glyceraldehyde 3-phosphate: step 3/5. In terms of biological role, catalyzes the interconversion of 2-phosphoglycerate and 3-phosphoglycerate. In Pyrococcus horikoshii (strain ATCC 700860 / DSM 12428 / JCM 9974 / NBRC 100139 / OT-3), this protein is 2,3-bisphosphoglycerate-independent phosphoglycerate mutase (apgM).